Here is a 186-residue protein sequence, read N- to C-terminus: Photosystem I assembly protein Ycf4 (186 aa).

2 helical membrane passes run 22–42 (FCWA…GTSS) and 57–77 (IIFF…LFIS).

The protein belongs to the Ycf4 family.

The protein resides in the plastid. The protein localises to the chloroplast thylakoid membrane. Functionally, seems to be required for the assembly of the photosystem I complex. The polypeptide is Photosystem I assembly protein Ycf4 (Vitis vinifera (Grape)).